Here is a 401-residue protein sequence, read N- to C-terminus: Phosphoglycerate kinase (401 aa).

Substrate contacts are provided by residues 21 to 23 (DLN), R36, 59 to 62 (HQGR), R116, and R156. ATP contacts are provided by residues E331 and 357 to 360 (GGDT).

It belongs to the phosphoglycerate kinase family.

The protein localises to the cytoplasm. The enzyme catalyses (2R)-3-phosphoglycerate + ATP = (2R)-3-phospho-glyceroyl phosphate + ADP. The protein operates within carbohydrate degradation; glycolysis; pyruvate from D-glyceraldehyde 3-phosphate: step 2/5. The protein is Phosphoglycerate kinase (pgk) of Haloarcula vallismortis (Halobacterium vallismortis).